Reading from the N-terminus, the 126-residue chain is Prefoldin subunit beta (126 aa).

It belongs to the prefoldin subunit beta family. Heterohexamer of two alpha and four beta subunits.

The protein localises to the cytoplasm. In terms of biological role, molecular chaperone capable of stabilizing a range of proteins. Seems to fulfill an ATP-independent, HSP70-like function in archaeal de novo protein folding. The chain is Prefoldin subunit beta from Pyrobaculum neutrophilum (strain DSM 2338 / JCM 9278 / NBRC 100436 / V24Sta) (Thermoproteus neutrophilus).